A 611-amino-acid polypeptide reads, in one-letter code: UvrABC system protein C (611 aa).

Residues 19–97 (QRPGVYRMVD…IKELRPRYNV (79 aa)) form the GIY-YIG domain. Residues 207–242 (NQVIEELGARMEAASERLEFEAAAQYRDRIQALQAV) form the UVR domain.

This sequence belongs to the UvrC family. Interacts with UvrB in an incision complex.

The protein resides in the cytoplasm. The UvrABC repair system catalyzes the recognition and processing of DNA lesions. UvrC both incises the 5' and 3' sides of the lesion. The N-terminal half is responsible for the 3' incision and the C-terminal half is responsible for the 5' incision. This Alkalilimnicola ehrlichii (strain ATCC BAA-1101 / DSM 17681 / MLHE-1) protein is UvrABC system protein C.